Reading from the N-terminus, the 353-residue chain is UPF0283 membrane protein KPK_3110 (353 aa).

The next 3 helical transmembrane spans lie at 70–90 (MVSAGLAIFGVSVVAQGVQWT), 99–119 (WIALGGCVAGALIVGAGVGSV), and 213–233 (ESTLMIAVSPLALVDMAFIAW).

This sequence belongs to the UPF0283 family.

The protein resides in the cell inner membrane. The protein is UPF0283 membrane protein KPK_3110 of Klebsiella pneumoniae (strain 342).